Consider the following 202-residue polypeptide: Adapter protein MecA 2 (202 aa).

Belongs to the MecA family. Homodimer.

Functionally, enables the recognition and targeting of unfolded and aggregated proteins to the ClpC protease or to other proteins involved in proteolysis. Acts negatively in the development of competence by binding ComK and recruiting it to the ClpCP protease. When overexpressed, inhibits sporulation. Also involved in Spx degradation by ClpC. This is Adapter protein MecA 2 (mecA2) from Bacillus anthracis.